Consider the following 78-residue polypeptide: NAD(P)H-quinone oxidoreductase subunit O (78 aa).

Belongs to the complex I NdhO subunit family. As to quaternary structure, NDH-1 can be composed of about 15 different subunits; different subcomplexes with different compositions have been identified which probably have different functions.

The protein resides in the cell inner membrane. It carries out the reaction a plastoquinone + NADH + (n+1) H(+)(in) = a plastoquinol + NAD(+) + n H(+)(out). The enzyme catalyses a plastoquinone + NADPH + (n+1) H(+)(in) = a plastoquinol + NADP(+) + n H(+)(out). Functionally, NDH-1 shuttles electrons from an unknown electron donor, via FMN and iron-sulfur (Fe-S) centers, to quinones in the respiratory and/or the photosynthetic chain. The immediate electron acceptor for the enzyme in this species is believed to be plastoquinone. Couples the redox reaction to proton translocation, and thus conserves the redox energy in a proton gradient. Cyanobacterial NDH-1 also plays a role in inorganic carbon-concentration. The chain is NAD(P)H-quinone oxidoreductase subunit O from Gloeobacter violaceus (strain ATCC 29082 / PCC 7421).